The following is a 138-amino-acid chain: NADPH-dependent 7-cyano-7-deazaguanine reductase (138 aa).

The Thioimide intermediate role is filled by cysteine 53. The active-site Proton donor is aspartate 60. Residues 75 to 77 (VEL) and 94 to 95 (HE) each bind substrate.

The protein belongs to the GTP cyclohydrolase I family. QueF type 1 subfamily.

It is found in the cytoplasm. The enzyme catalyses 7-aminomethyl-7-carbaguanine + 2 NADP(+) = 7-cyano-7-deazaguanine + 2 NADPH + 3 H(+). The protein operates within tRNA modification; tRNA-queuosine biosynthesis. Its function is as follows. Catalyzes the NADPH-dependent reduction of 7-cyano-7-deazaguanine (preQ0) to 7-aminomethyl-7-deazaguanine (preQ1). In Gloeothece citriformis (strain PCC 7424) (Cyanothece sp. (strain PCC 7424)), this protein is NADPH-dependent 7-cyano-7-deazaguanine reductase.